A 177-amino-acid chain; its full sequence is Large ribosomal subunit protein uL6 (177 aa).

The protein belongs to the universal ribosomal protein uL6 family. Part of the 50S ribosomal subunit.

This protein binds to the 23S rRNA, and is important in its secondary structure. It is located near the subunit interface in the base of the L7/L12 stalk, and near the tRNA binding site of the peptidyltransferase center. This Rickettsia akari (strain Hartford) protein is Large ribosomal subunit protein uL6.